Reading from the N-terminus, the 175-residue chain is UPF0398 protein SPH_0478 (175 aa).

Belongs to the UPF0398 family.

The chain is UPF0398 protein SPH_0478 from Streptococcus pneumoniae (strain Hungary19A-6).